Reading from the N-terminus, the 372-residue chain is 3-galactosyl-N-acetylglucosaminide 4-alpha-L-fucosyltransferase FUT3 (372 aa).

Residues 1-15 (MDPLGAAKPQWPWRR) are Cytoplasmic-facing. The helical; Signal-anchor for type II membrane protein transmembrane segment at 16–34 (CLAALLFQLLVAVCFFSYL) threads the bilayer. The Lumenal portion of the chain corresponds to 35–372 (RVSRDDATGS…TMRSIAAWFT (338 aa)). The segment at 40-69 (DATGSPRPGLMAVEPVTGAPSGSSRQDTTP) is disordered. N-linked (GlcNAc...) asparagine glycosylation is found at N165 and N196.

This sequence belongs to the glycosyltransferase 10 family. Glycosylated.

The protein localises to the golgi apparatus. The protein resides in the golgi stack membrane. The enzyme catalyses a beta-D-galactosyl-(1-&gt;3)-N-acetyl-beta-D-glucosaminyl derivative + GDP-beta-L-fucose = a beta-D-galactosyl-(1-&gt;3)-[alpha-L-fucosyl-(1-&gt;4)]-N-acetyl-beta-D-glucosaminyl derivative + GDP + H(+). The catalysed reaction is an N-acetyl-alpha-neuraminyl-(2-&gt;3)-beta-D-galactosyl-(1-&gt;4)-N-acetyl-beta-D-glucosaminyl derivative + GDP-beta-L-fucose = an alpha-Neu5Ac-(2-&gt;3)-beta-D-Gal-(1-&gt;4)-[alpha-L-Fuc-(1-&gt;3)]-beta-D-GlcNAc derivative + GDP + H(+). It catalyses the reaction a beta-D-galactosyl-(1-&gt;4)-N-acetyl-beta-D-glucosaminyl derivative + GDP-beta-L-fucose = a beta-D-galactosyl-(1-&gt;4)-[alpha-L-fucosyl-(1-&gt;3)]-N-acetyl-beta-D-glucosaminyl derivative + GDP + H(+). It carries out the reaction an alpha-Neu5Ac-(2-&gt;3)-beta-D-Gal-(1-&gt;4)-beta-D-GlcNAc-(1-&gt;3)-beta-D-Gal-(1-&gt;4)-[alpha-L-Fuc-(1-&gt;3)]-beta-D-GlcNAc derivative + GDP-beta-L-fucose = an alpha-Neu5Ac-(2-&gt;3)-beta-D-Gal-(1-&gt;4)-[alpha-L-Fuc-(1-&gt;3)]-beta-D-GlcNAc-(1-&gt;3)-beta-D-Gal-(1-&gt;4)-[alpha-L-Fuc-(1-&gt;3)]-beta-D-GlcNAc derivative + GDP + H(+). The enzyme catalyses Lc4Cer + GDP-beta-L-fucose = a lactoside III(4)-a-Fuc-Lc4Cer + GDP + H(+). The catalysed reaction is a beta-D-Gal-(1-&gt;3)-beta-D-GlcNAc-(1-&gt;3)-beta-D-Gal-(1-&gt;4)-beta-D-Glc-(1&lt;-&gt;1')-Cer(d18:1(4E)) + GDP-beta-L-fucose = a III(4)-a-Fuc-Lc4Cer(d18:1(4E)) + GDP + H(+). It catalyses the reaction N-acetyl-alpha-neuraminosyl-(2-&gt;3)-beta-D-galactosyl-(1-&gt;3)-[N-acetyl-alpha-neuraminosyl-(2-&gt;6)]-N-acetyl-beta-D-glucosaminyl-(1-&gt;3)-beta-D-galactosyl-(1-&gt;4)-beta-D-glucosyl-(1&lt;-&gt;1')-N-acyl-sphing-4-enine + GDP-beta-L-fucose = N-acetyl-alpha-neuraminosyl-(2-&gt;3)-beta-D-galactosyl-(1-&gt;3)-alpha-L-fucosyl-(1-&gt;4)-[N-acetyl-alpha-neuraminosyl-(2-&gt;6)-N-acetyl-beta-D-glucosaminyl-(1-&gt;3)]-beta-D-galactosyl-(1-&gt;4)-beta-D-glucosyl-(1&lt;-&gt;1')-N-acyl-sphing-4-enine + GDP + H(+). It carries out the reaction N-acetyl-alpha-neuraminosyl-(2-&gt;3)-beta-D-galactosyl-(1-&gt;3)-N-acetyl-beta-D-glucosaminyl-(1-&gt;3)-beta-D-galactosyl-(1-&gt;4)-beta-D-glucosyl-(1&lt;-&gt;1')-N-acyl-sphing-4-enine + GDP-beta-L-fucose = N-acetyl-alpha-neuraminosyl-(2-&gt;3)-beta-D-galactosyl-(1-&gt;3)-alpha-L-fucosyl-(1-&gt;4)-[N-acetyl-beta-D-glucosaminyl-(1-&gt;3)]-beta-D-galactosyl-(1-&gt;4)-beta-D-glucosyl-(1&lt;-&gt;1')-N-acyl-sphing-4-enine + GDP + H(+). The enzyme catalyses beta-D-galactosyl-(1-&gt;3)-N-acetyl-D-glucosamine + GDP-beta-L-fucose = beta-D-galactosyl-(1-&gt;3)-[alpha-L-fucosyl-(1-&gt;4)]-N-acetyl-D-glucosamine + GDP + H(+). The catalysed reaction is alpha-L-Fuc-(1-&gt;2)-beta-D-Gal-(1-&gt;3)-D-GlcNAc + GDP-beta-L-fucose = alpha-L-Fuc-(1-&gt;2)-beta-D-Gal-(1-&gt;3)-[alpha-L-Fuc-(1-&gt;4)]-D-GlcNAc + GDP + H(+). It catalyses the reaction alpha-L-Fuc-(1-&gt;2)-beta-D-Gal-(1-&gt;4)-D-GlcNAc + GDP-beta-L-fucose = alpha-L-Fuc-(1-&gt;2)-beta-D-Gal-(1-&gt;4)-[alpha-L-Fuc-(1-&gt;3)]-D-GlcNAc + GDP + H(+). It carries out the reaction beta-D-galactosyl-(1-&gt;4)-N-acetyl-D-glucosamine + GDP-beta-L-fucose = beta-D-galactosyl-(1-&gt;4)-[alpha-L-fucosyl-(1-&gt;3)]-N-acetyl-D-glucosamine + GDP + H(+). The enzyme catalyses lactose + GDP-beta-L-fucose = beta-D-galactosyl-(1-&gt;4)-[alpha-L-fucosyl-(1-&gt;3)]-D-glucose + GDP + H(+). The catalysed reaction is an alpha-Neu5Ac-(2-&gt;3)-beta-D-Gal-(1-&gt;3)-D-GlcNAc derivative + GDP-beta-L-fucose = an alpha-Neu5Ac-(2-&gt;3)-beta-D-Gal-(1-&gt;3)-[alpha-L-Fuc-(1-&gt;4)]-beta-D-GlcNAc derivative + GDP + H(+). It functions in the pathway protein modification; protein glycosylation. In terms of biological role, catalyzes the transfer of L-fucose, from a guanosine diphosphate-beta-L-fucose, to both the subterminal N-acetyl glucosamine (GlcNAc) of type 1 chain (beta-D-Gal-(1-&gt;3)-beta-D-GlcNAc) glycolipids and oligosaccharides via an alpha(1,4) linkage, and the subterminal glucose (Glc) or GlcNAc of type 2 chain (beta-D-Gal-(1-&gt;4)-beta-D-GlcNAc) oligosaccharides via an alpha(1,3) linkage, independently of the presence of terminal alpha-L-fucosyl-(1,2) moieties on the terminal galactose of these acceptors and participates in the blood groups Lewis determination and expression of Lewis a (Le(a)), lewis b (Le(b)), Lewis x/SSEA-1 (Le(x)) and lewis y (Le(y)) antigens. Also catalyzes the transfer of L-fucose to subterminal GlcNAc of sialyl- and disialyl-lactotetraosylceramide to produce sialyl Lewis a (sLe(a)) and disialyl Lewis a via an alpha(1,4) linkage and therefore may regulate cell surface sialyl Lewis a expression and consequently regulates adhesive properties to E-selectin, cell proliferation and migration. Catalyzes the transfer of an L-fucose to 3'-sialyl-N-acetyllactosamine by an alpha(1,3) linkage, which allows the formation of sialyl-Lewis x structure and therefore may regulate the sialyl-Lewis x surface antigen expression and consequently adhesive properties to E-selectin. Prefers type 1 chain over type 2 acceptors. Type 1 tetrasaccharide is a better acceptor than type 1 disaccharide suggesting that a beta anomeric configuration of GlcNAc in the substrate is preferred. Lewis-positive (Le(+)) individuals have an active enzyme while Lewis-negative (Le(-)) individuals have an inactive enzyme. In Pan troglodytes (Chimpanzee), this protein is 3-galactosyl-N-acetylglucosaminide 4-alpha-L-fucosyltransferase FUT3.